A 327-amino-acid chain; its full sequence is Malate dehydrogenase (327 aa).

12–18 (GAAGQIC) provides a ligand contact to NAD(+). Residues Arg-92 and Arg-98 each contribute to the substrate site. NAD(+) contacts are provided by residues Asn-105, Gln-112, and 129-131 (TGN). Substrate is bound by residues Asn-131 and Arg-162. The active-site Proton acceptor is His-187.

It belongs to the LDH/MDH superfamily. MDH type 2 family.

It carries out the reaction (S)-malate + NAD(+) = oxaloacetate + NADH + H(+). In terms of biological role, catalyzes the reversible oxidation of malate to oxaloacetate. The polypeptide is Malate dehydrogenase (Cutibacterium acnes (strain DSM 16379 / KPA171202) (Propionibacterium acnes)).